The primary structure comprises 525 residues: Probable protein kinase UbiB (525 aa).

Residues 118-500 (EFERVPVASA…QRRTNRLLQA (383 aa)) enclose the Protein kinase domain. Residues 124 to 132 (VASASIAQV) and lysine 150 each bind ATP. Catalysis depends on aspartate 285, which acts as the Proton acceptor. A helical transmembrane segment spans residues 501-521 (LLVFGLAVGAGAVIARVLIVL).

The protein belongs to the ABC1 family. UbiB subfamily.

It is found in the cell inner membrane. The protein operates within cofactor biosynthesis; ubiquinone biosynthesis [regulation]. Functionally, is probably a protein kinase regulator of UbiI activity which is involved in aerobic coenzyme Q (ubiquinone) biosynthesis. The protein is Probable protein kinase UbiB of Burkholderia mallei (strain SAVP1).